A 1095-amino-acid polypeptide reads, in one-letter code: MASSSSNSWRYDVFPSFRGEDVRNNFLSHLLKEFESKGIVTFRDDHIKRSHTIGHELRAAIRESKISVVLFSENYASSSWCLDELIEIMKCKEEQGLKVMPVFYKVDPSDIRKQTGKFGMSFLETCCGKTEERQHNWRRALTDAANILGDHPQNWDNEAYKITTISKDVLEKLNATPSRDFNDLVGMEAHIAKMESLLCLESQGVRIVGIWGPAGVGKTTIARALYNQYHENFNLSIFMENVRESYGEAGLDDYGLKLHLQQRFLSKLLDQKDLRVRHLGAIEERLKSQKVLIILDDVDNIEQLKALAKENQWFGNKSRIVVTTQNKQLLVSHDINHMYQVAYPSKQEALTIFCQHAFKQSSPSDDLKHLAIEFTTLAGHLPLALRVLGSFMRGKGKEEWEFSLPTLKSRLDGEVEKVLKVGYDGLHDHEKDLFLHIACIFSGQHENYLKQMIIANNDTYVSFGLQVLADKSLIQKFENGRIEMHSLLRQLGKEVVRKQSIYEPGKRQFLMNAKETCGVLSNNTGTGTVLGISLDMCEIKEELYISEKTFEEMRNLVYLKFYMSSPIDDKMKVKLQLPEEGLSYLPQLRLLHWDAYPLEFFPSSFRPECLVELNMSHSKLKKLWSGVQPLRNLRTMNLNSSRNLEILPNLMEATKLNRLDLGWCESLVELPSSIKNLQHLILLEMSCCKKLEIIPTNINLPSLEVLHFRYCTRLQTFPEISTNIRLLNLIGTAITEVPPSVKYWSKIDEICMERAKVKRLVHVPYVLEKLCLRENKELETIPRYLKYLPRLQMIDISYCINIISLPKLPGSVSALTAVNCESLQILHGHFRNKSIHLNFINCLKLGQRAQEKIHRSVYIHQSSYIADVLPGEHVPAYFSYRSTGSSIMIHSNKVDLSKFNRFKVCLVLGAGKRFEGCDIKFYKQFFCKPREYYVPKHLDSPLLKSDHLCMCEFELMPPHPPTEWELLHPNEFLEVSFESRGGLYKCEVKECGLQFLEPHETSEFRYLSPHLYLGGSWIGNSSSSIEEIIHVDQEESSSDSEEIIYADQEESSSGIEEIIHAEREGTNRRKSVMRWIKVGARKMGLSLECLKPWTR.

Positions 9 to 173 constitute a TIR domain; it reads WRYDVFPSFR…TISKDVLEKL (165 aa). The active site involves E84. The NB-ARC domain maps to 168-454; sequence DVLEKLNATP…HENYLKQMII (287 aa). LRR repeat units follow at residues 609–631, 632–654, 655–677, 679–701, 702–722, and 723–744; these read CLVE…QPLR, NLRT…MEAT, KLNR…IKNL, HLIL…INLP, SLEV…EIST, and NIRL…VKYW.

It carries out the reaction NAD(+) + H2O = ADP-D-ribose + nicotinamide + H(+). The chain is Putative disease resistance protein At4g11170 from Arabidopsis thaliana (Mouse-ear cress).